Consider the following 233-residue polypeptide: MIDSIRSSRALIDVRRLGTVDYRAAWQQQRDLADARVAGGPDTLLLLQHPAVYTAGRRTEPHERPLDGTPVVDTDRGGKITWHGPGQLVGYPIIGLAEPLDVVDYVRRLEEALIKVCADLGLDTVRVPGRSGVWVPGDAGRPDRKVAAIGVRVSRATTLHGFALNCDCELGAFNAIVPCGISDAGVTSLTAELRRPVAVDDVVTSVADAVCDALDGVLPVREHSPGARVASAM.

A BPL/LPL catalytic domain is found at 38-218; that stretch reads AGGPDTLLLL…AVCDALDGVL (181 aa). Residues 57 to 66 are compositionally biased toward basic and acidic residues; sequence RRTEPHERPL. A disordered region spans residues 57-77; the sequence is RRTEPHERPLDGTPVVDTDRG. Substrate-binding positions include 76–83, 148–150, and 161–163; these read RGGKITWH, AIG, and GFA. The active-site Acyl-thioester intermediate is the Cys-179.

The protein belongs to the LipB family.

It is found in the cytoplasm. The enzyme catalyses octanoyl-[ACP] + L-lysyl-[protein] = N(6)-octanoyl-L-lysyl-[protein] + holo-[ACP] + H(+). It participates in protein modification; protein lipoylation via endogenous pathway; protein N(6)-(lipoyl)lysine from octanoyl-[acyl-carrier-protein]: step 1/2. Its function is as follows. Catalyzes the transfer of endogenously produced octanoic acid from octanoyl-acyl-carrier-protein onto the lipoyl domains of lipoate-dependent enzymes. Lipoyl-ACP can also act as a substrate although octanoyl-ACP is likely to be the physiological substrate. In Mycolicibacterium paratuberculosis (strain ATCC BAA-968 / K-10) (Mycobacterium paratuberculosis), this protein is Octanoyltransferase.